The primary structure comprises 132 residues: Agouti-signaling protein (132 aa).

Residues 1 to 22 (MDVTXLLLATLLVFLCCFAAYS) form the signal peptide. A glycan (N-linked (GlcNAc...) asparagine) is linked at asparagine 39. Residues 62–93 (ISRKEAENKRSSKKEASKQKVARPRTPLSVPC) are disordered. A compositionally biased stretch (basic and acidic residues) spans 64-79 (RKEAENKRSSKKEASK). 5 disulfides stabilise this stretch: cysteine 93–cysteine 108, cysteine 100–cysteine 114, cysteine 107–cysteine 125, cysteine 111–cysteine 132, and cysteine 116–cysteine 123. One can recognise an Agouti domain in the interval 93–132 (CVSTRGSCKPPAPACCHPCASCQCRFFRSACSCRVINVNC).

The protein localises to the secreted. Functionally, involved in the regulation of melanogenesis. The binding of ASP to MC1R precludes alpha-MSH initiated signaling and thus blocks production of cAMP, leading to a down-regulation of eumelanogenesis (brown/black pigment) and thus increasing synthesis of pheomelanin (yellow/red pigment). This is Agouti-signaling protein (ASIP) from Leontopithecus chrysomelas (Golden-headed lion tamarin).